We begin with the raw amino-acid sequence, 89 residues long: Small ribosomal subunit protein uS15 (89 aa).

Positions 1–21 (MAITQERKNQLISEFKTHESD) are enriched in basic and acidic residues. The segment at 1–23 (MAITQERKNQLISEFKTHESDTG) is disordered.

It belongs to the universal ribosomal protein uS15 family. Part of the 30S ribosomal subunit. Forms a bridge to the 50S subunit in the 70S ribosome, contacting the 23S rRNA.

One of the primary rRNA binding proteins, it binds directly to 16S rRNA where it helps nucleate assembly of the platform of the 30S subunit by binding and bridging several RNA helices of the 16S rRNA. Functionally, forms an intersubunit bridge (bridge B4) with the 23S rRNA of the 50S subunit in the ribosome. This chain is Small ribosomal subunit protein uS15, found in Bacillus velezensis (strain DSM 23117 / BGSC 10A6 / LMG 26770 / FZB42) (Bacillus amyloliquefaciens subsp. plantarum).